Consider the following 256-residue polypeptide: Small ribosomal subunit protein eS1 (256 aa).

The span at 1-18 (MAVGKNKRLSKGKKGVKK) shows a compositional bias: basic residues. Residues 1-21 (MAVGKNKRLSKGKKGVKKRTV) form a disordered region. Residue alanine 2 is modified to N-acetylalanine; partial.

This sequence belongs to the eukaryotic ribosomal protein eS1 family. In terms of assembly, component of the small ribosomal subunit. Mature ribosomes consist of a small (40S) and a large (60S) subunit. The 40S subunit contains about 33 different proteins and 1 molecule of RNA (18S). The 60S subunit contains about 49 different proteins and 3 molecules of RNA (25S, 5.8S and 5S).

Its subcellular location is the cytoplasm. The chain is Small ribosomal subunit protein eS1 (rps1) from Aspergillus niger (strain ATCC MYA-4892 / CBS 513.88 / FGSC A1513).